A 1484-amino-acid chain; its full sequence is Glutamate receptor ionotropic, NMDA 2B (1484 aa).

The signal sequence occupies residues 1–26; it reads MKPRAECCSPKFWLVLAVLAVSGSRA. The Extracellular segment spans residues 27 to 555; that stretch reads RSQKSPPSIG…SPSAFLEPFS (529 aa). A glycan (N-linked (GlcNAc...) asparagine) is linked at N74. An intrachain disulfide couples C86 to C321. Residues H127 and E284 each contribute to the Zn(2+) site. N341, N348, N444, and N491 each carry an N-linked (GlcNAc...) asparagine glycan. Disulfide bonds link C429–C456 and C436–C457. Residues T514 and R519 each coordinate L-glutamate. A glycan (N-linked (GlcNAc...) asparagine) is linked at N542. The chain crosses the membrane as a helical span at residues 556–576; sequence ADVWVMMFVMLLIVSAVAVFV. At 577 to 601 the chain is on the cytoplasmic side; it reads FEYFSPVGYNRCLADGREPGGPSFT. Residues 602-613 constitute an intramembrane region (discontinuously helical); it reads IGKAIWLLWGLV. The tract at residues 604–623 is pore-forming; that stretch reads KAIWLLWGLVFNNSVPVQNP. Residues 614–627 lie on the Cytoplasmic side of the membrane; sequence FNNSVPVQNPKGTT. Residues 628-647 traverse the membrane as a helical segment; the sequence is SKIMVSVWAFFAVIFLASYT. The Extracellular segment spans residues 648–819; sequence ANLAAFMIQE…SSQLDIDNMA (172 aa). N688 is a glycosylation site (N-linked (GlcNAc...) asparagine). L-glutamate is bound by residues 690-691 and D732; that span reads ST. Residues 820 to 835 form a helical membrane-spanning segment; it reads GVFYMLGAAMALSLIT. Over 836 to 1484 the chain is Cytoplasmic; the sequence is FICEHLFYWQ…EKLSSIESDV (649 aa). S882, S886, S917, and S920 each carry phosphoserine. Residues Y962 and Y1039 each carry the phosphotyrosine modification. S1058, S1061, and S1064 each carry phosphoserine. Residues 1074-1097 form a disordered region; the sequence is EGNAAKRRKQQYKDSLKKRPASAK. A phosphotyrosine mark is found at Y1109 and Y1133. Phosphoserine is present on S1143. At Y1155 the chain carries Phosphotyrosine. A disordered region spans residues 1161–1194; it reads DFKRDSVSGGGPCTNRSHIKHGTGDKHGVVSGVP. S1255 and S1259 each carry phosphoserine. Residues 1271-1301 are disordered; it reads AVTSNASTTKYPQSPTNSKAQKKNRNKLRRQ. Residues 1272 to 1289 are compositionally biased toward polar residues; sequence VTSNASTTKYPQSPTNSK. Positions 1290 to 1301 are enriched in basic residues; it reads AQKKNRNKLRRQ. Positions 1292 to 1304 are interaction with DAPK1; that stretch reads KKNRNKLRRQHSY. The residue at position 1303 (S1303) is a Phosphoserine; by DAPK1. Residue Y1474 is modified to Phosphotyrosine. The PDZ-binding signature appears at 1482-1484; that stretch reads SDV.

Belongs to the glutamate-gated ion channel (TC 1.A.10.1) family. NR2B/GRIN2B subfamily. Heterotetramer. Forms heterotetrameric channels composed of two GluN1/zeta subunits (GRIN1), and two identical GluN2/epsilon subunits (GRIN2A, GRIN2B, GRIN2C or GRIN2D) or GluN3 subunits (GRIN3A or GRIN3B) (in vitro). Can also form heterotetrameric channels that contain at least two GluN1 subunits and at least two different GluN2 subunits (or a combination of one GluN2 and one GluN3 subunits) (in vitro). In vivo, the subunit composition may depend on the expression levels of the different subunits. Found in a complex with GRIN1 and GRIN3B. Found in a complex with GRIN1, GRIN3A and PPP2CB. Interacts with PDZ domains of PATJ, DLG3 and DLG4. Interacts with HIP1 and NETO1. Interacts with MAGI3. Interacts with DAPK1. Found in a complex with GRIN1 and PRR7. Interacts with PRR7. Interacts with CAMK2A. Interacts with ARC; preventing ARC oligomerization. Interacts with TMEM25. Interacts (via the extreme C-terminus) with FRMPD2 (via the second PDZ domain); the interaction is direct and is likely to promote NMDAR-mediated neural signal transmission. Interacts with FAM81A; the interaction facilitates condensate formation via liquid-liquid phase separation. In terms of processing, phosphorylated on tyrosine residues. Phosphorylation at Ser-1303 by DAPK1 enhances synaptic NMDA receptor channel activity. As to expression, primarily found in the fronto-parieto-temporal cortex and hippocampus pyramidal cells, lower expression in the basal ganglia.

The protein resides in the cell membrane. It localises to the postsynaptic cell membrane. Its subcellular location is the cell projection. The protein localises to the dendrite. It is found in the late endosome. The protein resides in the lysosome. It localises to the cytoplasm. Its subcellular location is the cytoskeleton. The catalysed reaction is Ca(2+)(in) = Ca(2+)(out). It carries out the reaction Na(+)(in) = Na(+)(out). It catalyses the reaction K(+)(in) = K(+)(out). Component of N-methyl-D-aspartate (NMDA) receptors (NMDARs) that function as heterotetrameric, ligand-gated cation channels with high calcium permeability and voltage-dependent block by Mg(2+). Participates in synaptic plasticity for learning and memory formation by contributing to the long-term depression (LTD) of hippocampus membrane currents. Channel activation requires binding of the neurotransmitter L-glutamate to the GluN2 subunit, glycine or D-serine binding to the GluN1 subunit, plus membrane depolarization to eliminate channel inhibition by Mg(2+). NMDARs mediate simultaneously the potasium efflux and the influx of calcium and sodium. Each GluN2 subunit confers differential attributes to channel properties, including activation, deactivation and desensitization kinetics, pH sensitivity, Ca2(+) permeability, and binding to allosteric modulators. In concert with DAPK1 at extrasynaptic sites, acts as a central mediator for stroke damage. Its phosphorylation at Ser-1303 by DAPK1 enhances synaptic NMDA receptor channel activity inducing injurious Ca2+ influx through them, resulting in an irreversible neuronal death. In Homo sapiens (Human), this protein is Glutamate receptor ionotropic, NMDA 2B.